The sequence spans 1027 residues: INO80 complex subunit D (1027 aa).

Lys87 is covalently cross-linked (Glycyl lysine isopeptide (Lys-Gly) (interchain with G-Cter in SUMO2)). Ser132 carries the post-translational modification Phosphoserine. Disordered regions lie at residues 193–278, 519–574, 813–850, 914–969, and 982–1027; these read HFSP…VDPP, RGDN…LSMP, RQQYSSDHSHSSPHGSHYDSEHVPSPYSDHITSPHTTS, LSTS…TSPK, and QLSS…PSPN. The span at 201-216 shows a compositional bias: low complexity; it reads SQQQPPQQHSHLSPLS. Over residues 229–257 the composition is skewed to polar residues; sequence VCKSPQPQNTSLPMQGVAPTTHTIAQARQ. The segment covering 525 to 559 has biased composition (basic residues); the sequence is KVQHQQQRKPRKKTKPPALTKKHKKKRRRGPRRPQ. The segment covering 914–932 has biased composition (low complexity); it reads LSTSLSTPPTTSNSETTQP. Residues 937-954 show a composition bias toward polar residues; it reads VTPSSSSVLPGLPQTSFS. A compositionally biased stretch (low complexity) spans 1001–1027; sequence APPTGFTVTGATATSTNNASSPFPSPN.

Belongs to the INO80D family. Component of the chromatin remodeling INO80 complex; specifically part of a complex module associated with the N-terminus of INO80.

The protein localises to the nucleus. Functionally, putative regulatory component of the chromatin remodeling INO80 complex which is involved in transcriptional regulation, DNA replication and probably DNA repair. The protein is INO80 complex subunit D of Homo sapiens (Human).